Reading from the N-terminus, the 554-residue chain is Zinc finger protein syd-9 (554 aa).

3 consecutive C2H2-type zinc fingers follow at residues 20-43 (LTCP…QMFH), 65-87 (FICE…RSVH), and 93-116 (YVCK…LKHH). Disordered stretches follow at residues 136-158 (KIVT…TATP), 298-319 (SPDT…PPMA), and 342-383 (ASGQ…CPSP). A compositionally biased stretch (low complexity) spans 142 to 158 (NGPTTNGSTPTTSTATP). 2 stretches are compositionally biased toward polar residues: residues 351 to 360 (PDSTDTQKGC) and 370 to 379 (SDPSTSSGDS). Residues 387–410 (LHCKECGTLVRKSSHLPIHMTMSH) form a C2H2-type 4 zinc finger. A disordered region spans residues 516 to 554 (RMEMSLSPIKPFQQRFSRERSSSSSVERSPSRERSRSPL). The segment covering 544 to 554 (SPSRERSRSPL) has biased composition (basic and acidic residues).

In terms of tissue distribution, expressed mainly in body wall muscles and ventral cord motoneurons.

The protein resides in the nucleus. It is found in the nucleus speckle. In terms of biological role, plays a role in regulating synaptic function, probably by modulation of endocytosis. May be dispensable in muscle for normal locomotion. May be involved in post-transcriptional mRNA processing, in parallel with unc-75. The sequence is that of Zinc finger protein syd-9 from Caenorhabditis elegans.